Here is a 249-residue protein sequence, read N- to C-terminus: tRNA pseudouridine synthase A (249 aa).

Asp52 functions as the Nucleophile in the catalytic mechanism. Substrate is bound at residue Tyr110.

Belongs to the tRNA pseudouridine synthase TruA family. As to quaternary structure, homodimer.

The catalysed reaction is uridine(38/39/40) in tRNA = pseudouridine(38/39/40) in tRNA. In terms of biological role, formation of pseudouridine at positions 38, 39 and 40 in the anticodon stem and loop of transfer RNAs. The protein is tRNA pseudouridine synthase A of Syntrophomonas wolfei subsp. wolfei (strain DSM 2245B / Goettingen).